The following is a 521-amino-acid chain: Type-2 serine--tRNA ligase (521 aa).

Ala316 provides a ligand contact to L-serine. Cys318 is a binding site for Zn(2+). L-serine is bound at residue Arg347. ATP is bound by residues Arg347–Glu349 and Arg358–Val359. L-serine is bound at residue Arg364 to Glu366. Residues Glu366 and Cys473 each contribute to the Zn(2+) site. Arg480 contributes to the ATP binding site.

Belongs to the class-II aminoacyl-tRNA synthetase family. Type-2 seryl-tRNA synthetase subfamily. In terms of assembly, homodimer. The cofactor is Zn(2+).

The protein resides in the cytoplasm. It catalyses the reaction tRNA(Ser) + L-serine + ATP = L-seryl-tRNA(Ser) + AMP + diphosphate + H(+). It carries out the reaction tRNA(Sec) + L-serine + ATP = L-seryl-tRNA(Sec) + AMP + diphosphate + H(+). The protein operates within aminoacyl-tRNA biosynthesis; selenocysteinyl-tRNA(Sec) biosynthesis; L-seryl-tRNA(Sec) from L-serine and tRNA(Sec): step 1/1. Its function is as follows. Catalyzes the attachment of serine to tRNA(Ser). Is also able to aminoacylate tRNA(Sec) with serine, to form the misacylated tRNA L-seryl-tRNA(Sec), which will be further converted into selenocysteinyl-tRNA(Sec). The protein is Type-2 serine--tRNA ligase (serS) of Methanocaldococcus jannaschii (strain ATCC 43067 / DSM 2661 / JAL-1 / JCM 10045 / NBRC 100440) (Methanococcus jannaschii).